A 945-amino-acid polypeptide reads, in one-letter code: Bifunctional glutamine synthetase adenylyltransferase/adenylyl-removing enzyme (945 aa).

The interval 1–440 (MMPLSPQLQQ…VFNELIGDDE (440 aa)) is adenylyl removase. The adenylyl transferase stretch occupies residues 449–945 (AEYWRELWQD…SASWQKWLMA (497 aa)).

This sequence belongs to the GlnE family. Requires Mg(2+) as cofactor.

It catalyses the reaction [glutamine synthetase]-O(4)-(5'-adenylyl)-L-tyrosine + phosphate = [glutamine synthetase]-L-tyrosine + ADP. The catalysed reaction is [glutamine synthetase]-L-tyrosine + ATP = [glutamine synthetase]-O(4)-(5'-adenylyl)-L-tyrosine + diphosphate. Functionally, involved in the regulation of glutamine synthetase GlnA, a key enzyme in the process to assimilate ammonia. When cellular nitrogen levels are high, the C-terminal adenylyl transferase (AT) inactivates GlnA by covalent transfer of an adenylyl group from ATP to specific tyrosine residue of GlnA, thus reducing its activity. Conversely, when nitrogen levels are low, the N-terminal adenylyl removase (AR) activates GlnA by removing the adenylyl group by phosphorolysis, increasing its activity. The regulatory region of GlnE binds the signal transduction protein PII (GlnB) which indicates the nitrogen status of the cell. The protein is Bifunctional glutamine synthetase adenylyltransferase/adenylyl-removing enzyme of Klebsiella pneumoniae subsp. pneumoniae (strain ATCC 700721 / MGH 78578).